A 101-amino-acid chain; its full sequence is uncharacterized protein (101 aa).

It is found in the mitochondrion. This is an uncharacterized protein from Arabidopsis thaliana (Mouse-ear cress).